A 363-amino-acid polypeptide reads, in one-letter code: Two-pore potassium channel 1 (363 aa).

The tract at residues 1-61 is disordered; the sequence is MSSDAARTPL…DDVKIDEPPP (61 aa). Topologically, residues 1 to 78 are cytoplasmic; that stretch reads MSSDAARTPL…FSDLNPNLRR (78 aa). The segment covering 31-42 has biased composition (basic residues); that stretch reads SSRKRRLRRSRS. Residues 79–99 traverse the membrane as a helical segment; sequence VIMFLALYLTIGTLCFYLVRD. An intramembrane region (pore-forming) is located at residues 111–130; sequence DALYFCIVTMTTVGYGDLVP. The helical transmembrane segment at 137-157 threads the bilayer; that stretch reads LLACAFVFSGMVLVGHLLSRA. At 158–197 the chain is on the cytoplasmic side; sequence ADYLVEKQEALLVRAFHLRQSFGPTDILKELHTNKLRYKC. The chain crosses the membrane as a helical span at residues 198 to 218; that stretch reads YATCLVLVVLFIVGTIFLVMV. An intramembrane region (pore-forming) is located at residues 225–244; it reads SAFYCVCSTVTTLGYGDKSF. The helical transmembrane segment at 251–271 threads the bilayer; the sequence is LFAVFWILTSSICLAQFFLYV. Topologically, residues 272-363 are cytoplasmic; the sequence is AELNTENKQR…LAQTTSQIQR (92 aa). 2 EF-hand domains span residues 288–323 and 327–362; these read LTRR…EMGK and KDIS…SQIQ. The Endoplasmic reticulum release signal signature appears at 296 to 298; the sequence is DLE. The Ca(2+) site is built by D301, D303, D305, E312, D340, D342, S344, T346, and D351.

It belongs to the two pore domain potassium channel (TC 1.A.1.7) family. As to quaternary structure, homodimer. Interacts with GRF1 and GRF6, but only GRF6 modulates the channel activity. Phosphorylation at Ser-42 increases and stabilizes the interaction with 14-3-3 proteins. Detected in mesophyll cells, guard cells and vascular tissues of the leaves. Expressed in the hilum, where the funiculus is attached during fruit maturation and in the embryo. Also expressed at a lower level in seedlings, root tips and elongation zones, and flowers. Could be detected in mitotically active tissues.

The protein resides in the vacuole membrane. Could be activated by protein kinase C. Strongly induced by calcium. Blocked by barium, tetraethylammonium (TEA), quinine and quinidine. In terms of biological role, voltage-independent, large conductance and potassium-selective tonoplast ion channel. Regulated by cytoplasmic calcium and pH. Does not mediate slow-vacuolar (SV) ionic currents, but essential to establish VK currents. Has some permeability for Rb(+) and NH(4)(+), but none for Na(+), Cs(+) or Li(+). Involved in intracellular K(+) redistribution and/or K(+) retranslocation between different tissues. This Arabidopsis thaliana (Mouse-ear cress) protein is Two-pore potassium channel 1 (TPK1).